Here is a 128-residue protein sequence, read N- to C-terminus: Large ribosomal subunit protein bL17 (128 aa).

The protein belongs to the bacterial ribosomal protein bL17 family. In terms of assembly, part of the 50S ribosomal subunit. Contacts protein L32.

This Vibrio cholerae serotype O1 (strain ATCC 39541 / Classical Ogawa 395 / O395) protein is Large ribosomal subunit protein bL17.